Here is a 388-residue protein sequence, read N- to C-terminus: Glucose-6-phosphate/phosphate translocator 2, chloroplastic (388 aa).

A chloroplast-targeting transit peptide spans 1-68 (MLSSIKPSSS…SASNFKREVK (68 aa)). 8 helical membrane-spanning segments follow: residues 95 to 115 (LKIGIYFATWWALNVVFNIYN), 122 to 142 (FPYPWLTSTLSLACGSLMMLV), 158 to 178 (FWKTLFPVAVAHTIGHVAATV), 211 to 231 (FPLPVYLSLLPIIGGCALAAI), 233 to 253 (ELNFNITGFMGAMISNLAFVF), 281 to 301 (LVILTPFSIAVEGPQMWAAGW), 305 to 325 (VSQVGPNFVWWVVAQSVFYHL), and 358 to 378 (IIIFHTPIQPVNALGAAIAIF). One can recognise an EamA domain in the interval 113–231 (IYNKKVLNAF…IIGGCALAAI (119 aa)).

Belongs to the TPT transporter family. GPT (TC 2.A.7.9) subfamily. In terms of tissue distribution, expressed in seeds, flowers, stamens, and rosette leaves, with highest levels found in sepals and senescing leaves.

The protein localises to the plastid. It localises to the chloroplast membrane. Glucose 6-phosphate (Glc6P) transporter. Also transports inorganic phosphate, 3-phosphoglycerate, triose phosphates and, to a leser extent, phosphoenolpyruvate. Responsible for the transport of Glc6P into plastids of heterotrophic tissues where it can be used as a carbon source for starch biosynthesis, as substrate for fatty acid biosynthesis or as substrate for NADPH generation via the oxidative pentose phosphate pathway (OPPP). Required for dynamic acclimation of photosynthesis and partitioning of Glc6P between the chloroplast and the cytosol. May modulate the sensing of sugar status during early seedling development. The sequence is that of Glucose-6-phosphate/phosphate translocator 2, chloroplastic from Arabidopsis thaliana (Mouse-ear cress).